The following is a 494-amino-acid chain: Alpha-amylase-related protein (494 aa).

The first 20 residues, 1–20, serve as a signal peptide directing secretion; that stretch reads MFKFAAAVILCLVAASSTLA. Gln21 is subject to Pyrrolidone carboxylic acid. Cysteines 48 and 104 form a disulfide. Asn118, Gln169, and Asp178 together coordinate Ca(2+). Cys157 and Cys171 are disulfide-bonded. A chloride-binding site is contributed by Arg206. Asp208 acts as the Nucleophile in catalysis. Position 212 (His212) interacts with Ca(2+). Glu245 (proton donor) is an active-site residue. Asn308 and Arg343 together coordinate chloride. Cystine bridges form between Cys376–Cys382, Cys418–Cys441, and Cys448–Cys460.

The protein belongs to the glycosyl hydrolase 13 family. In terms of assembly, monomer. Ca(2+) serves as cofactor. The cofactor is chloride.

The protein localises to the secreted. The enzyme catalyses Endohydrolysis of (1-&gt;4)-alpha-D-glucosidic linkages in polysaccharides containing three or more (1-&gt;4)-alpha-linked D-glucose units.. The protein is Alpha-amylase-related protein (Amyrel) of Drosophila atripex (Fruit fly).